Reading from the N-terminus, the 545-residue chain is Chaperonin GroEL (545 aa).

ATP contacts are provided by residues 30 to 33 (TLGP), lysine 51, 87 to 91 (DGTTT), glycine 415, 479 to 481 (NAA), and aspartate 495.

This sequence belongs to the chaperonin (HSP60) family. Forms a cylinder of 14 subunits composed of two heptameric rings stacked back-to-back. Interacts with the co-chaperonin GroES.

Its subcellular location is the cytoplasm. The enzyme catalyses ATP + H2O + a folded polypeptide = ADP + phosphate + an unfolded polypeptide.. Together with its co-chaperonin GroES, plays an essential role in assisting protein folding. The GroEL-GroES system forms a nano-cage that allows encapsulation of the non-native substrate proteins and provides a physical environment optimized to promote and accelerate protein folding. In Salmonella agona (strain SL483), this protein is Chaperonin GroEL.